Here is a 1561-residue protein sequence, read N- to C-terminus: Synemin (1561 aa).

The interval 1-10 (MLSWRLQTGS) is head. Residues 11 to 49 (EKAELQELNARLYDYVCRVRELERENLLLEEELRSRLSR) form a coil 1A region. An interaction with DMD and UTRN region spans residues 11–320 (EKAELQELNA…YRALLEGESN (310 aa)). The IF rod domain occupies 11–322 (EKAELQELNA…ALLEGESNPE (312 aa)). The interval 50 to 58 (EDRWAEDQA) is linker 1. A coil 1B region spans residues 59–163 (LYAEEARSLR…DLRARAASLT (105 aa)). The tract at residues 164–186 (MHFRARATSPAAPPPRLRDVHDS) is linker 12. A coil 2 region spans residues 187–300 (YALLVAESWR…LRDYQELLQV (114 aa)). A tail region spans residues 301-1561 (KTGLSLEVAT…EEEEEGEGWF (1261 aa)). Polar residues-rich tracts occupy residues 371-390 (SSAS…TTAV) and 401-421 (SRHS…KTIS). Disordered stretches follow at residues 371-421 (SSAS…KTIS), 549-574 (DARK…RSVK), and 591-637 (EVST…DSTT). Over residues 601–624 (GRKDVSHSGGREAETKETRFRLDT) the composition is skewed to basic and acidic residues. The span at 625–637 (QDTASSLQSDSTT) shows a compositional bias: polar residues. T653 bears the Phosphothreonine mark. Residues S655, S778, S780, S1044, S1049, S1077, S1087, S1179, and S1182 each carry the phosphoserine modification. Disordered stretches follow at residues 1033-1061 (SVVR…VPAG) and 1075-1099 (SPSG…QGPV). Residues 1086 to 1099 (VSPSSDQRVTQGPV) show a composition bias toward polar residues. The segment at 1152 to 1453 (VSGDFSEAVS…GPKETSFTFQ (302 aa)) is interaction with TLN1 and VCL. Residues 1212–1231 (ADISGSGRMPGSERSHTEKE) form a disordered region. Basic and acidic residues predominate over residues 1222–1231 (GSERSHTEKE). The segment at 1242–1557 (AQVGGNFATE…DNEEEEEEEG (316 aa)) is interaction with DMD and UTRN. A Phosphoserine modification is found at S1425. R1481 carries the post-translational modification Omega-N-methylarginine. The disordered stretch occupies residues 1491–1519 (DERVASTGSGASPGDAHQAPGEKGTEQAG).

The protein belongs to the intermediate filament family. Interacts with DES, DMD, DTNA, TLN1, UTRN and VCL. Isoform 1 and isoform 2 interact with GFAP and VIM. Isoform 2 and isoform 3 are detected in adult skeletal muscle, heart and bladder, whereas isoform 1 is only detected in adult bladder (at protein level).

Its subcellular location is the cytoplasm. The protein localises to the cytoskeleton. The protein resides in the cell junction. It localises to the adherens junction. Type-VI intermediate filament (IF) which plays an important cytoskeletal role within the muscle cell cytoskeleton. It forms heteromeric IFs with desmin and/or vimentin, and via its interaction with cytoskeletal proteins alpha-dystrobrevin, dystrophin, talin-1, utrophin and vinculin, is able to link these heteromeric IFs to adherens-type junctions, such as to the costameres, neuromuscular junctions, and myotendinous junctions within striated muscle cells. In Mus musculus (Mouse), this protein is Synemin.